We begin with the raw amino-acid sequence, 618 residues long: 1-deoxy-D-xylulose-5-phosphate synthase (618 aa).

Thiamine diphosphate-binding positions include H70 and 111–113 (GHS). Mg(2+) is bound at residue D142. Residues 143–144 (GS), N171, Y278, and E360 each bind thiamine diphosphate. N171 serves as a coordination point for Mg(2+).

It belongs to the transketolase family. DXPS subfamily. As to quaternary structure, homodimer. The cofactor is Mg(2+). Requires thiamine diphosphate as cofactor.

It carries out the reaction D-glyceraldehyde 3-phosphate + pyruvate + H(+) = 1-deoxy-D-xylulose 5-phosphate + CO2. It participates in metabolic intermediate biosynthesis; 1-deoxy-D-xylulose 5-phosphate biosynthesis; 1-deoxy-D-xylulose 5-phosphate from D-glyceraldehyde 3-phosphate and pyruvate: step 1/1. In terms of biological role, catalyzes the acyloin condensation reaction between C atoms 2 and 3 of pyruvate and glyceraldehyde 3-phosphate to yield 1-deoxy-D-xylulose-5-phosphate (DXP). The polypeptide is 1-deoxy-D-xylulose-5-phosphate synthase (Helicobacter pylori (strain HPAG1)).